The following is a 621-amino-acid chain: Alpha-actinin-like protein 1 (621 aa).

2 consecutive Calponin-homology (CH) domains span residues 8 to 114 and 123 to 230; these read SVQN…LRFT and LTAK…HAFS. The interval 86 to 110 is actin-binding; the sequence is LTNIGPADIVDGNLKLILGLIWTLI. 3 EF-hand domains span residues 388 to 419, 487 to 549, and 550 to 618; these read LSTISNEITNLQGDWRDQLDHVEFLQEHLGPL, DGIT…EIVM, and EELE…AEDK.

Belongs to the alpha-actinin family.

The protein resides in the cytoplasm. Its subcellular location is the cytoskeleton. Binds to actin and is involved in actin-ring formation and organization. Plays a role in cytokinesis and is involved in septation. This is Alpha-actinin-like protein 1 (ain1) from Schizosaccharomyces pombe (strain 972 / ATCC 24843) (Fission yeast).